Here is a 418-residue protein sequence, read N- to C-terminus: NADH-quinone oxidoreductase subunit D (418 aa).

It belongs to the complex I 49 kDa subunit family. As to quaternary structure, NDH-1 is composed of 14 different subunits. Subunits NuoB, C, D, E, F, and G constitute the peripheral sector of the complex.

Its subcellular location is the cell inner membrane. The enzyme catalyses a quinone + NADH + 5 H(+)(in) = a quinol + NAD(+) + 4 H(+)(out). Its function is as follows. NDH-1 shuttles electrons from NADH, via FMN and iron-sulfur (Fe-S) centers, to quinones in the respiratory chain. The immediate electron acceptor for the enzyme in this species is believed to be ubiquinone. Couples the redox reaction to proton translocation (for every two electrons transferred, four hydrogen ions are translocated across the cytoplasmic membrane), and thus conserves the redox energy in a proton gradient. This is NADH-quinone oxidoreductase subunit D from Bordetella avium (strain 197N).